The chain runs to 382 residues: Low-specificity L-threonine aldolase (382 aa).

K214 bears the N6-(pyridoxal phosphate)lysine mark.

The protein belongs to the threonine aldolase family. In terms of assembly, homotetramer. Requires pyridoxal 5'-phosphate as cofactor.

It catalyses the reaction L-threonine = acetaldehyde + glycine. The enzyme catalyses L-allo-threonine = acetaldehyde + glycine. Its pathway is amino-acid degradation; L-threonine degradation via aldolase pathway; acetaldehyde and glycine from L-threonine: step 1/1. The chain is Low-specificity L-threonine aldolase (GLY1) from Eremothecium gossypii (strain ATCC 10895 / CBS 109.51 / FGSC 9923 / NRRL Y-1056) (Yeast).